The chain runs to 86 residues: Large ribosomal subunit protein bL31B (86 aa).

This sequence belongs to the bacterial ribosomal protein bL31 family. Type B subfamily. In terms of assembly, part of the 50S ribosomal subunit.

This Burkholderia cenocepacia (strain ATCC BAA-245 / DSM 16553 / LMG 16656 / NCTC 13227 / J2315 / CF5610) (Burkholderia cepacia (strain J2315)) protein is Large ribosomal subunit protein bL31B.